A 122-amino-acid chain; its full sequence is Large ribosomal subunit protein uL14 (122 aa).

It belongs to the universal ribosomal protein uL14 family. In terms of assembly, part of the 50S ribosomal subunit. Forms a cluster with proteins L3 and L19. In the 70S ribosome, L14 and L19 interact and together make contacts with the 16S rRNA in bridges B5 and B8.

Functionally, binds to 23S rRNA. Forms part of two intersubunit bridges in the 70S ribosome. The sequence is that of Large ribosomal subunit protein uL14 from Exiguobacterium sp. (strain ATCC BAA-1283 / AT1b).